A 290-amino-acid chain; its full sequence is Pre-mRNA-splicing factor cwf20 (290 aa).

2 disordered regions span residues 1–61 and 114–134; these read MSLV…KSSF and PNNSVSDLTSTGSSETVKKST. Positions 114 to 128 are enriched in polar residues; that stretch reads PNNSVSDLTSTGSSE.

Belongs to the 40S cdc5-associated complex (or cwf complex), a spliceosome sub-complex reminiscent of a late-stage spliceosome composed of the U2, U5 and U6 snRNAs and at least brr2, cdc5, cwf2/prp3, cwf3/syf1, cwf4/syf3, cwf5/ecm2, spp42/cwf6, cwf7/spf27, cwf8, cwf9, cwf10, cwf11, cwf12, prp45/cwf13, cwf14, cwf15, cwf16, cwf17, cwf18, cwf19, cwf20, cwf21, cwf22, cwf23, cwf24, cwf25, cwf26, cyp7/cwf27, cwf28, cwf29/ist3, lea1, msl1, prp5/cwf1, prp10, prp12/sap130, prp17, prp22, sap61, sap62, sap114, sap145, slu7, smb1, smd1, smd3, smf1, smg1 and syf2.

The protein localises to the nucleus. In terms of biological role, involved in mRNA splicing where it associates with cdc5 and the other cwf proteins as part of the spliceosome. The sequence is that of Pre-mRNA-splicing factor cwf20 (cwf20) from Schizosaccharomyces pombe (strain 972 / ATCC 24843) (Fission yeast).